The following is a 309-amino-acid chain: Tagatose-6-phosphate kinase (309 aa).

Belongs to the carbohydrate kinase PfkB family. LacC subfamily.

The catalysed reaction is D-tagatofuranose 6-phosphate + ATP = D-tagatofuranose 1,6-bisphosphate + ADP + H(+). It participates in carbohydrate metabolism; D-tagatose 6-phosphate degradation; D-glyceraldehyde 3-phosphate and glycerone phosphate from D-tagatose 6-phosphate: step 1/2. This Streptococcus pyogenes serotype M28 (strain MGAS6180) protein is Tagatose-6-phosphate kinase.